A 636-amino-acid polypeptide reads, in one-letter code: Probable Xaa-Pro aminopeptidase P (636 aa).

Positions 414, 425, 523, and 537 each coordinate Mn(2+).

The protein belongs to the peptidase M24B family. Mn(2+) serves as cofactor.

It carries out the reaction Release of any N-terminal amino acid, including proline, that is linked to proline, even from a dipeptide or tripeptide.. Catalyzes the removal of a penultimate prolyl residue from the N-termini of peptides. This Ajellomyces capsulatus (strain H143) (Darling's disease fungus) protein is Probable Xaa-Pro aminopeptidase P (AMPP).